The sequence spans 120 residues: Large ribosomal subunit protein bL17 (120 aa).

Belongs to the bacterial ribosomal protein bL17 family. In terms of assembly, part of the 50S ribosomal subunit. Contacts protein L32.

The sequence is that of Large ribosomal subunit protein bL17 from Geobacillus kaustophilus (strain HTA426).